The primary structure comprises 568 residues: Keratin, type I cytoskeletal 10 (568 aa).

Residues 1–15 show a composition bias toward low complexity; the sequence is MSVRYSSSKQYSSSR. A disordered region spans residues 1-31; that stretch reads MSVRYSSSKQYSSSRSGGGGGGGGGSSFRIS. A head region spans residues 1–135; that stretch reads MSVRYSSSKQ…GGDGGLLSGN (135 aa). Phosphoserine occurs at positions 14, 16, 36, 47, 50, and 160. Residues 16 to 26 show a composition bias toward gly residues; it reads SGGGGGGGGGS. The tract at residues 136–171 is coil 1A; that stretch reads EKVTMQNLNDRLASYLDKVRALEESNYELEGKIKEW. One can recognise an IF rod domain in the interval 136 to 450; that stretch reads EKVTMQNLND…SLLEGEGSSG (315 aa). The tract at residues 172-192 is linker 1; that stretch reads YEKHGNSSQRAPRDYSKYYQT. The coil 1B stretch occupies residues 193–284; that stretch reads IEDLKNQILN…KNHEEEMRDL (92 aa). Positions 285-307 are linker 12; the sequence is QNVSTGDVNVEMNAAPGVDLTEL. Residues 308 to 446 form a coil 2 region; that stretch reads LNNMRNQYEQ…QTYRSLLEGE (139 aa). Residues 447–568 form a tail region; that stretch reads GSSGGGGYGG…GESSSKGPRY (122 aa). The segment covering 485-546 has biased composition (gly residues); sequence GGGSSGGGGH…GGGYGGGSSS (62 aa). The tract at residues 485 to 568 is disordered; that stretch reads GGGSSGGGGH…GESSSKGPRY (84 aa). Residues 547–568 are compositionally biased toward low complexity; it reads SGGHKSSSSGSVGESSSKGPRY.

Belongs to the intermediate filament family. As to quaternary structure, heterotetramer of two type I and two type II keratins. Heterodimer with KRT1. Two heterodimers of KRT1 and KRT10 form a heterotetramer. The KRT10 subunit in the heterotetramer is probably disulfide-linked. In terms of tissue distribution, expressed in skin.

Its subcellular location is the secreted. The protein resides in the extracellular space. It is found in the cell surface. It localises to the cytoplasm. Its function is as follows. Plays a role in the establishment of the epidermal barrier on plantar skin. Involved in the maintenance of cell layer development and keratin filament bundles in suprabasal cells of the epithelium. This is Keratin, type I cytoskeletal 10 from Canis lupus familiaris (Dog).